The chain runs to 900 residues: uncharacterized protein (900 aa).

The segment covering 1–16 (MGSNKEAKNIDSKNDR) has biased composition (basic and acidic residues). 5 disordered regions span residues 1 to 84 (MGSN…KLSS), 103 to 160 (NSSR…PDPS), 512 to 556 (NFNQ…KKSG), 568 to 613 (LAST…KSAN), and 648 to 676 (KRSS…NSFP). Polar residues predominate over residues 17–27 (GLTSITSNKIS). The span at 30–58 (KAHDNHTSSMITEHKNADKEKGKQEKESR) shows a compositional bias: basic and acidic residues. Composition is skewed to low complexity over residues 63–76 (QSSS…PQVS) and 103–127 (NSSR…QLSK). S105 carries the phosphoserine modification. Residues 129 to 143 (GLHHHHTSNNKHSHR) are compositionally biased toward basic residues. The segment covering 528–537 (SSRSLSLPSS) has biased composition (low complexity). The segment covering 543–553 (KRKKSPTKATK) has biased composition (basic residues). Composition is skewed to low complexity over residues 570–601 (STSH…SSPP) and 665–676 (SPISSNSDNSFP).

This is an uncharacterized protein from Saccharomyces cerevisiae (strain ATCC 204508 / S288c) (Baker's yeast).